Here is a 438-residue protein sequence, read N- to C-terminus: uncharacterized protein (438 aa).

Disordered regions lie at residues 1-22 and 156-264; these read MRDN…TYDP and DTAK…PWRP. A compositionally biased stretch (basic and acidic residues) spans 156–170; that stretch reads DTAKSNEKLQGDESK. Low complexity predominate over residues 171 to 189; that stretch reads SSNGSSSTSTTTQRGSTNS. The segment covering 191–206 has biased composition (basic and acidic residues); that stretch reads TKVKALKIEVKKKSDS.

This sequence belongs to the adhesin P1 family.

This is an uncharacterized protein from Mycoplasma pneumoniae (strain ATCC 29342 / M129 / Subtype 1) (Mycoplasmoides pneumoniae).